Here is a 285-residue protein sequence, read N- to C-terminus: HTH-type transcriptional regulator YofA (285 aa).

Residues 1–58 form the HTH lysR-type domain; that stretch reads MESGDLKIFQAVAREGSITKAAQMLNYVQSNVTARVHNLEEDLNIRLFHRTNRGMKLT. Residues 18–37 constitute a DNA-binding region (H-T-H motif); that stretch reads ITKAAQMLNYVQSNVTARVH.

It belongs to the LysR transcriptional regulatory family.

The protein resides in the cytoplasm. Functionally, regulates expression of the cell division protein ftsW, and is essential for cell viability during stationary phase. This Bacillus subtilis (strain 168) protein is HTH-type transcriptional regulator YofA (yofA).